Consider the following 281-residue polypeptide: MAAKMAKNVDKPLFTATFNVQASSADYATFIAGIRNKLRNPAHFSHNRPVLPPVEPNVPPSRWFHVVLKASPTSAGLTLAIRADNIYLEGFKSSDGTWWELTPGLIPGATYVGFGGTYRDLLGDTDKLTNVALGRQQLADAVTALHGRTKADKPSGPKQQQAREAVTTLLLMVNEATRFQTVSGFVAGLLHPKAVEKKSGKIGNEMKAQVNGWQDLSAALLKTDVKPPPGKSPAKFAPIEKMGVRTAVQAANTLGILLFVEVPGGLTVAKALELFHASGGK.

The residue at position 2 (Ala-2) is an N-acetylalanine. Residue Glu-175 is part of the active site.

The protein belongs to the ribosome-inactivating protein family. Type 1 RIP subfamily.

It localises to the cytoplasm. The catalysed reaction is Endohydrolysis of the N-glycosidic bond at one specific adenosine on the 28S rRNA.. Inhibits the elongation phase of protein synthesis. It inactivates fungal ribosomes even more effectively than mammalian ribosomes and is thought to function as a constitutive antifungal agent in plants. The chain is Protein synthesis inhibitor I (RIP30) from Hordeum vulgare (Barley).